Consider the following 860-residue polypeptide: Protein argonaute-3 (860 aa).

The PAZ domain occupies 230–349 (PVIQFMCEVL…LPLEVCNIVA (120 aa)). The Piwi domain occupies 518–819 (LIIVILPGKT…VAFRARYHLV (302 aa)). The interaction with guide RNA stretch occupies residues 530–567 (YAEVKRAGDTLLGMATQCVQVKNVIKTSPQTLSNLCLK). A divalent metal cation-binding residues include D598, E638, and D670. The interaction with guide RNA stretch occupies residues 758–805 (QGTSRPSHYHVLWDDNCFTADELQLLTYQLCHTYVRCTRSVSIPAPAY). A divalent metal cation is bound at residue H808.

This sequence belongs to the argonaute family. Ago subfamily.

It is found in the cytoplasm. It localises to the P-body. It catalyses the reaction Endonucleolytic cleavage to 5'-phosphomonoester.. In terms of biological role, required for RNA-mediated gene silencing (RNAi). Binds to short RNAs such as microRNAs (miRNAs) and represses the translation of mRNAs which are complementary to them. Possesses RNA slicer activity but only on select RNAs bearing 5'- and 3'-flanking sequences to the region of guide-target complementarity. This chain is Protein argonaute-3 (AGO3), found in Gallus gallus (Chicken).